The following is a 516-amino-acid chain: UDP-N-acetylmuramyl-tripeptide synthetase (516 aa).

Residue serine 38 participates in UDP-N-acetyl-alpha-D-muramoyl-L-alanyl-D-glutamate binding. 116 to 122 contributes to the ATP binding site; that stretch reads GTKGKTT. Residues 162–163, serine 189, and arginine 197 contribute to the UDP-N-acetyl-alpha-D-muramoyl-L-alanyl-D-glutamate site; that span reads TT. The residue at position 231 (lysine 231) is an N6-carboxylysine.

Belongs to the MurCDEF family. MurE subfamily. In terms of processing, carboxylation is probably crucial for Mg(2+) binding and, consequently, for the gamma-phosphate positioning of ATP.

It localises to the cytoplasm. The protein operates within cell wall biogenesis; peptidoglycan biosynthesis. Catalyzes the addition of an amino acid to the nucleotide precursor UDP-N-acetylmuramoyl-L-alanyl-D-glutamate (UMAG) in the biosynthesis of bacterial cell-wall peptidoglycan. This chain is UDP-N-acetylmuramyl-tripeptide synthetase, found in Lactobacillus delbrueckii subsp. bulgaricus (strain ATCC 11842 / DSM 20081 / BCRC 10696 / JCM 1002 / NBRC 13953 / NCIMB 11778 / NCTC 12712 / WDCM 00102 / Lb 14).